We begin with the raw amino-acid sequence, 136 residues long: MLQPKRTKFRKVHKGRNRGLAQGTDVSFGTFGLKAVGRGRLTARQIEAARRAMTRAVKRQGKIWIRVFPDKPITEKPLAVRMGKGKGNVEYWVALIQPGKVLYEMDGVPEELAREAFKLAAAKLPIKTTFVTKTVM.

Belongs to the universal ribosomal protein uL16 family. As to quaternary structure, part of the 50S ribosomal subunit.

Functionally, binds 23S rRNA and is also seen to make contacts with the A and possibly P site tRNAs. This Edwardsiella ictaluri (strain 93-146) protein is Large ribosomal subunit protein uL16.